A 73-amino-acid polypeptide reads, in one-letter code: Translation initiation factor IF-1 (73 aa).

Positions Met1–Lys72 constitute an S1-like domain.

Belongs to the IF-1 family. Component of the 30S ribosomal translation pre-initiation complex which assembles on the 30S ribosome in the order IF-2 and IF-3, IF-1 and N-formylmethionyl-tRNA(fMet); mRNA recruitment can occur at any time during PIC assembly.

It is found in the cytoplasm. One of the essential components for the initiation of protein synthesis. Stabilizes the binding of IF-2 and IF-3 on the 30S subunit to which N-formylmethionyl-tRNA(fMet) subsequently binds. Helps modulate mRNA selection, yielding the 30S pre-initiation complex (PIC). Upon addition of the 50S ribosomal subunit IF-1, IF-2 and IF-3 are released leaving the mature 70S translation initiation complex. The chain is Translation initiation factor IF-1 from Dehalococcoides mccartyi (strain ATCC BAA-2266 / KCTC 15142 / 195) (Dehalococcoides ethenogenes (strain 195)).